The following is a 283-amino-acid chain: Protoheme IX farnesyltransferase (283 aa).

7 helical membrane-spanning segments follow: residues 13 to 33, 35 to 55, 90 to 110, 156 to 176, 208 to 228, 230 to 250, and 262 to 282; these read ISSV…PTGL, GGTL…VGTL, ILLV…LTAV, LGAG…PHFL, MIGF…TEAA, WIYG…TIVF, and VLKA…VDWF.

It belongs to the UbiA prenyltransferase family. Protoheme IX farnesyltransferase subfamily.

Its subcellular location is the cell inner membrane. The enzyme catalyses heme b + (2E,6E)-farnesyl diphosphate + H2O = Fe(II)-heme o + diphosphate. Its pathway is porphyrin-containing compound metabolism; heme O biosynthesis; heme O from protoheme: step 1/1. Its function is as follows. Converts heme B (protoheme IX) to heme O by substitution of the vinyl group on carbon 2 of heme B porphyrin ring with a hydroxyethyl farnesyl side group. This chain is Protoheme IX farnesyltransferase, found in Salinibacter ruber (strain DSM 13855 / M31).